Reading from the N-terminus, the 164-residue chain is General odorant-binding protein 1 (164 aa).

The first 18 residues, methionine 1 to threonine 18, serve as a signal peptide directing secretion. Cystine bridges form between cysteine 37-cysteine 72, cysteine 68-cysteine 126, and cysteine 115-cysteine 135.

This sequence belongs to the PBP/GOBP family. In terms of assembly, homodimer. As to expression, antenna.

Its function is as follows. Present in the aqueous fluid surrounding olfactory sensory dendrites and are thought to aid in the capture and transport of hydrophobic odorants into and through this fluid. The chain is General odorant-binding protein 1 from Bombyx mori (Silk moth).